We begin with the raw amino-acid sequence, 506 residues long: FAD-linked oxidoreductase chry5 (506 aa).

Residues 1 to 17 (MHLQALTGLATLAVTAA) form the signal peptide. The FAD-binding PCMH-type domain occupies 59–241 (LDKPTVNIVA…TSVTSKTYDA (183 aa)). N-linked (GlcNAc...) asparagine glycans are attached at residues Asn-205, Asn-272, Asn-281, Asn-389, and Asn-431.

This sequence belongs to the oxygen-dependent FAD-linked oxidoreductase family. FAD serves as cofactor.

The protein operates within pigment biosynthesis. Its function is as follows. FAD-linked oxidoreductase; part of the gene cluster that mediates the biosynthesis of the yellow pigment chrysogine. Pyruvic acid and anthranilic acid are likely substrates for the nonribosomal peptide synthetase chry1/NRPS14, with pyruvic acid adenylated by the first A domain and anthranilic acid by the second. If pyruvic acid and anthranilic acid are merged and released from chry1/NRPS14 by hydrolysis, a subsequent amidation would lead to 2-pyruvoylaminobenzamide. This process is probably catalyzed by the amidotransferase chry2 using glutamine as amino donor. The dehydrogenase chry5 that has a terminal berberine bridge domain for C-N cyclization could catalyze the cyclization of 2-pyruvoylaminobenzamide to yield acetyl-4(3H)-quinazolidinone. A final reduction of acetyl-4(3H)-quinazolidinone catalyzed by the oxidoreductase chry4 would result in chrysogine. This Gibberella zeae (strain ATCC MYA-4620 / CBS 123657 / FGSC 9075 / NRRL 31084 / PH-1) (Wheat head blight fungus) protein is FAD-linked oxidoreductase chry5.